A 271-amino-acid chain; its full sequence is 4-diphosphocytidyl-2-C-methyl-D-erythritol kinase (271 aa).

The active site involves Lys8. Position 90–100 (90–100 (PFGAGLGGGSA)) interacts with ATP. Asp132 is a catalytic residue.

The protein belongs to the GHMP kinase family. IspE subfamily.

It catalyses the reaction 4-CDP-2-C-methyl-D-erythritol + ATP = 4-CDP-2-C-methyl-D-erythritol 2-phosphate + ADP + H(+). Its pathway is isoprenoid biosynthesis; isopentenyl diphosphate biosynthesis via DXP pathway; isopentenyl diphosphate from 1-deoxy-D-xylulose 5-phosphate: step 3/6. Catalyzes the phosphorylation of the position 2 hydroxy group of 4-diphosphocytidyl-2C-methyl-D-erythritol. This is 4-diphosphocytidyl-2-C-methyl-D-erythritol kinase from Parabacteroides distasonis (strain ATCC 8503 / DSM 20701 / CIP 104284 / JCM 5825 / NCTC 11152).